Reading from the N-terminus, the 130-residue chain is UPF0102 protein AHA_3896 (130 aa).

Belongs to the UPF0102 family.

The protein is UPF0102 protein AHA_3896 of Aeromonas hydrophila subsp. hydrophila (strain ATCC 7966 / DSM 30187 / BCRC 13018 / CCUG 14551 / JCM 1027 / KCTC 2358 / NCIMB 9240 / NCTC 8049).